Reading from the N-terminus, the 454-residue chain is UDP-N-acetylmuramoylalanine--D-glutamate ligase (454 aa).

115–121 contacts ATP; sequence GTNGKTT.

This sequence belongs to the MurCDEF family.

It localises to the cytoplasm. It catalyses the reaction UDP-N-acetyl-alpha-D-muramoyl-L-alanine + D-glutamate + ATP = UDP-N-acetyl-alpha-D-muramoyl-L-alanyl-D-glutamate + ADP + phosphate + H(+). It participates in cell wall biogenesis; peptidoglycan biosynthesis. Its function is as follows. Cell wall formation. Catalyzes the addition of glutamate to the nucleotide precursor UDP-N-acetylmuramoyl-L-alanine (UMA). The chain is UDP-N-acetylmuramoylalanine--D-glutamate ligase from Thermoanaerobacter sp. (strain X514).